A 162-amino-acid chain; its full sequence is Large ribosomal subunit protein uL10 (162 aa).

This sequence belongs to the universal ribosomal protein uL10 family. In terms of assembly, part of the ribosomal stalk of the 50S ribosomal subunit. The N-terminus interacts with L11 and the large rRNA to form the base of the stalk. The C-terminus forms an elongated spine to which L12 dimers bind in a sequential fashion forming a multimeric L10(L12)X complex.

Forms part of the ribosomal stalk, playing a central role in the interaction of the ribosome with GTP-bound translation factors. This is Large ribosomal subunit protein uL10 from Aliarcobacter butzleri (strain RM4018) (Arcobacter butzleri).